A 101-amino-acid chain; its full sequence is Thyrotropin subunit beta (101 aa).

4 disulfides stabilise this stretch: Cys-2/Cys-88, Cys-10/Cys-66, Cys-14/Cys-68, and Cys-71/Cys-78. N-linked (GlcNAc...) asparagine glycosylation is present at Asn-6.

Belongs to the glycoprotein hormones subunit beta family. Heterodimer of a common alpha chain and a unique beta chain which confers biological specificity to thyrotropin, lutropin, follitropin and gonadotropin.

It localises to the secreted. Its function is as follows. Indispensable for the control of thyroid structure and metabolism. This Phodopus sungorus (Striped hairy-footed hamster) protein is Thyrotropin subunit beta (TSHB).